A 220-amino-acid chain; its full sequence is Ribonuclease HII (220 aa).

In terms of domain architecture, RNase H type-2 spans 1-210; that stretch reads MKVAGVDEAG…ARKIEERFRK (210 aa). A divalent metal cation is bound by residues aspartate 7, glutamate 8, and aspartate 105.

It belongs to the RNase HII family. It depends on Mn(2+) as a cofactor. Mg(2+) serves as cofactor.

The protein resides in the cytoplasm. The enzyme catalyses Endonucleolytic cleavage to 5'-phosphomonoester.. Endonuclease that specifically degrades the RNA of RNA-DNA hybrids. This Pyrococcus horikoshii (strain ATCC 700860 / DSM 12428 / JCM 9974 / NBRC 100139 / OT-3) protein is Ribonuclease HII (rnhB).